The following is a 337-amino-acid chain: m7GpppX diphosphatase (337 aa).

A disordered region spans residues 1–37 (MADTAPQPSKRKRERDPEEAEAPSTEEKEARVGNGTS). The residue at position 2 (A2) is an N-acetylalanine. A nuclear localization signal (NLS) motif is present at residues 10–13 (KRKR). A phosphoserine mark is found at S24 and S101. K138 and K142 each carry N6-acetyllysine. Positions 142–154 (KYLHQDLHLVRET) match the nuclear export sequence (NES) motif. Residues W175, E185, D205, K207, and 268 to 279 (HYLPSYYHLHVH) contribute to the substrate site. Positions 275–279 (HLHVH) match the Histidine triad motif motif. The Nucleophile role is filled by H277.

It belongs to the HIT family. Homodimer. Associates with components of the exosome multienzyme ribonuclease complex, such as EXOSC3 and EXOSC4. Interacts with NDOR1.

The protein resides in the cytoplasm. Its subcellular location is the nucleus. The catalysed reaction is a 5'-end (N(7)-methyl 5'-triphosphoguanosine)-ribonucleoside in mRNA + H2O = N(7)-methyl-GMP + a 5'-end diphospho-ribonucleoside in mRNA + 2 H(+). The hydrolytic product 7-methylguanosine diphosphate (m7GDP) efficiently inhibits the decapping scavenger activity and acts as a competitive inhibitor in vitro. Inhibited by 2,4-diaminoquinazoline. Decapping scavenger enzyme that catalyzes the cleavage of a residual cap structure following the degradation of mRNAs by the 3'-&gt;5' exosome-mediated mRNA decay pathway. Hydrolyzes cap analog structures like 7-methylguanosine nucleoside triphosphate (m7GpppG) with up to 10 nucleotide substrates (small capped oligoribonucleotides) and specifically releases 5'-phosphorylated RNA fragments and 7-methylguanosine monophosphate (m7GMP). Cleaves cap analog structures like tri-methyl guanosine nucleoside triphosphate (m3(2,2,7)GpppG) with very poor efficiency. Does not hydrolyze unmethylated cap analog (GpppG) and shows no decapping activity on intact m7GpppG-capped mRNA molecules longer than 25 nucleotides. Does not hydrolyze 7-methylguanosine diphosphate (m7GDP) to m7GMP. May also play a role in the 5'-&gt;3 mRNA decay pathway; m7GDP, the downstream product released by the 5'-&gt;3' mRNA mediated decapping activity, may be also converted by DCPS to m7GMP. Binds to m7GpppG and strongly to m7GDP. Plays a role in first intron splicing of pre-mRNAs. Inhibits activation-induced cell death. The chain is m7GpppX diphosphatase (DCPS) from Sus scrofa (Pig).